The primary structure comprises 683 residues: ATP-dependent zinc metalloprotease FtsH (683 aa).

The tract at residues methionine 1–serine 43 is disordered. At methionine 1 to lysine 70 the chain is on the cytoplasmic side. Residues glutamate 10–glutamate 28 show a composition bias toward acidic residues. The chain crosses the membrane as a helical span at residues proline 71–asparagine 91. At lysine 92–serine 174 the chain is on the periplasmic side. A helical membrane pass occupies residues isoleucine 175–phenylalanine 195. Over isoleucine 196–tyrosine 683 the chain is Cytoplasmic. Residue glycine 270–threonine 277 coordinates ATP. Residue histidine 494 coordinates Zn(2+). The active site involves glutamate 495. 2 residues coordinate Zn(2+): histidine 498 and aspartate 569.

In the central section; belongs to the AAA ATPase family. It in the C-terminal section; belongs to the peptidase M41 family. In terms of assembly, homohexamer. Zn(2+) is required as a cofactor.

The protein localises to the cell inner membrane. Functionally, acts as a processive, ATP-dependent zinc metallopeptidase for both cytoplasmic and membrane proteins. Plays a role in the quality control of integral membrane proteins. This Streptobacillus moniliformis (strain ATCC 14647 / DSM 12112 / NCTC 10651 / 9901) protein is ATP-dependent zinc metalloprotease FtsH.